Consider the following 132-residue polypeptide: Glycine cleavage system H protein (132 aa).

In terms of domain architecture, Lipoyl-binding spans 24 to 106 (RVRVGITDYA…YGAGWLFELE (83 aa)). N6-lipoyllysine is present on lysine 65.

Belongs to the GcvH family. As to quaternary structure, the glycine cleavage system is composed of four proteins: P, T, L and H. The cofactor is (R)-lipoate.

In terms of biological role, the glycine cleavage system catalyzes the degradation of glycine. The H protein shuttles the methylamine group of glycine from the P protein to the T protein. The protein is Glycine cleavage system H protein of Nocardia farcinica (strain IFM 10152).